The following is a 579-amino-acid chain: Peptidoglycan D,D-transpeptidase FtsI (579 aa).

A helical membrane pass occupies residues 15–35; sequence FCVIVGLLLAMVGAIVWRIVD. Residue S294 is the Acyl-ester intermediate of the active site. The interval 558 to 579 is disordered; the sequence is DNLPTATEQQQVNAAPAKGGRG. Residues 561-570 show a composition bias toward polar residues; that stretch reads PTATEQQQVN.

It belongs to the transpeptidase family. FtsI subfamily.

The protein resides in the cell inner membrane. The enzyme catalyses Preferential cleavage: (Ac)2-L-Lys-D-Ala-|-D-Ala. Also transpeptidation of peptidyl-alanyl moieties that are N-acyl substituents of D-alanine.. Its pathway is cell wall biogenesis; peptidoglycan biosynthesis. Catalyzes cross-linking of the peptidoglycan cell wall at the division septum. Binds penicillin. This Pseudomonas aeruginosa (strain ATCC 15692 / DSM 22644 / CIP 104116 / JCM 14847 / LMG 12228 / 1C / PRS 101 / PAO1) protein is Peptidoglycan D,D-transpeptidase FtsI.